The chain runs to 65 residues: Protein translocase subunit SecE (65 aa).

Residues 1 to 27 (MEKLKEFLKGVRDELKRVVWPSRELVV) are Cytoplasmic-facing. The helical transmembrane segment at 28 to 59 (KATISVIIFSLAIGVYLWILDLTFTKIISFIL) threads the bilayer. Over 60–65 (SLRGSL) the chain is Periplasmic.

The protein belongs to the SecE/SEC61-gamma family. As to quaternary structure, component of the Sec protein translocase complex. Heterotrimer consisting of SecY, SecE and SecG subunits. The heterotrimers can form oligomers, although 1 heterotrimer is thought to be able to translocate proteins. Interacts with SecDF, and other proteins may be involved. The channel interacts with SecA via subunit SecY.

It localises to the cell inner membrane. Essential subunit of the protein translocation channel SecYEG. Clamps together the 2 halves of SecY. May contact the channel plug during translocation. The chain is Protein translocase subunit SecE from Aquifex aeolicus (strain VF5).